Here is a 1070-residue protein sequence, read N- to C-terminus: DNA double-strand break repair Rad50 ATPase (1070 aa).

ATP-binding positions include R12, N32–S38, and Q142. Coiled-coil stretches lie at residues L227–E257, E369–G403, and L449–R478. The Zinc-hook domain occupies L508–K607. Zn(2+) contacts are provided by C555 and C558. Coiled-coil stretches lie at residues T570–D614 and L878–L908. Position 969–974 (L969–E974) interacts with ATP.

Belongs to the SMC family. RAD50 subfamily. As to quaternary structure, homodimer. Forms a heterotetramer composed of two Mre11 subunits and two Rad50 subunits. The cofactor is Zn(2+).

Its function is as follows. Part of the Rad50/Mre11 complex, which is involved in the early steps of DNA double-strand break (DSB) repair. The complex may facilitate opening of the processed DNA ends to aid in the recruitment of HerA and NurA. Rad50 controls the balance between DNA end bridging and DNA resection via ATP-dependent structural rearrangements of the Rad50/Mre11 complex. This Methanosarcina mazei (strain ATCC BAA-159 / DSM 3647 / Goe1 / Go1 / JCM 11833 / OCM 88) (Methanosarcina frisia) protein is DNA double-strand break repair Rad50 ATPase.